A 411-amino-acid polypeptide reads, in one-letter code: Gamma-glutamyl phosphate reductase (411 aa).

It belongs to the gamma-glutamyl phosphate reductase family.

The protein resides in the cytoplasm. The catalysed reaction is L-glutamate 5-semialdehyde + phosphate + NADP(+) = L-glutamyl 5-phosphate + NADPH + H(+). Its pathway is amino-acid biosynthesis; L-proline biosynthesis; L-glutamate 5-semialdehyde from L-glutamate: step 2/2. Catalyzes the NADPH-dependent reduction of L-glutamate 5-phosphate into L-glutamate 5-semialdehyde and phosphate. The product spontaneously undergoes cyclization to form 1-pyrroline-5-carboxylate. The sequence is that of Gamma-glutamyl phosphate reductase from Wolinella succinogenes (strain ATCC 29543 / DSM 1740 / CCUG 13145 / JCM 31913 / LMG 7466 / NCTC 11488 / FDC 602W) (Vibrio succinogenes).